The primary structure comprises 208 residues: N-(5'-phosphoribosyl)anthranilate isomerase (208 aa).

This sequence belongs to the TrpF family.

The enzyme catalyses N-(5-phospho-beta-D-ribosyl)anthranilate = 1-(2-carboxyphenylamino)-1-deoxy-D-ribulose 5-phosphate. Its pathway is amino-acid biosynthesis; L-tryptophan biosynthesis; L-tryptophan from chorismate: step 3/5. The polypeptide is N-(5'-phosphoribosyl)anthranilate isomerase (Neisseria gonorrhoeae (strain NCCP11945)).